Reading from the N-terminus, the 296-residue chain is Protein FAM221A (296 aa).

Positions 235–263 are disordered; that stretch reads MQPPSTSSPQPLAVGPSTQISSLRKPEED. Over residues 237-256 the composition is skewed to polar residues; that stretch reads PPSTSSPQPLAVGPSTQISS.

This sequence belongs to the FAM221 family.

The sequence is that of Protein FAM221A (Fam221a) from Rattus norvegicus (Rat).